A 651-amino-acid chain; its full sequence is Acetyl-coenzyme A synthetase (651 aa).

CoA-binding positions include R190–K193 and T311. Residues G387–P389, D411–T416, D508, and R523 contribute to the ATP site. S531 serves as a coordination point for CoA. R534 contributes to the ATP binding site. Residues V545, H547, and V550 each contribute to the Mg(2+) site. K617 is modified (N6-acetyllysine).

This sequence belongs to the ATP-dependent AMP-binding enzyme family. It depends on Mg(2+) as a cofactor. Post-translationally, acetylated. Deacetylation by the SIR2-homolog deacetylase activates the enzyme.

It catalyses the reaction acetate + ATP + CoA = acetyl-CoA + AMP + diphosphate. In terms of biological role, catalyzes the conversion of acetate into acetyl-CoA (AcCoA), an essential intermediate at the junction of anabolic and catabolic pathways. AcsA undergoes a two-step reaction. In the first half reaction, AcsA combines acetate with ATP to form acetyl-adenylate (AcAMP) intermediate. In the second half reaction, it can then transfer the acetyl group from AcAMP to the sulfhydryl group of CoA, forming the product AcCoA. This is Acetyl-coenzyme A synthetase from Mycobacterium bovis (strain ATCC BAA-935 / AF2122/97).